The chain runs to 212 residues: Phosphatidylserine decarboxylase proenzyme (212 aa).

The active-site Schiff-base intermediate with substrate; via pyruvic acid is S182. S182 is subject to Pyruvic acid (Ser); by autocatalysis.

It belongs to the phosphatidylserine decarboxylase family. PSD-A subfamily. Heterodimer of a large membrane-associated beta subunit and a small pyruvoyl-containing alpha subunit. Pyruvate serves as cofactor. Post-translationally, is synthesized initially as an inactive proenzyme. Formation of the active enzyme involves a self-maturation process in which the active site pyruvoyl group is generated from an internal serine residue via an autocatalytic post-translational modification. Two non-identical subunits are generated from the proenzyme in this reaction, and the pyruvate is formed at the N-terminus of the alpha chain, which is derived from the carboxyl end of the proenzyme. The post-translation cleavage follows an unusual pathway, termed non-hydrolytic serinolysis, in which the side chain hydroxyl group of the serine supplies its oxygen atom to form the C-terminus of the beta chain, while the remainder of the serine residue undergoes an oxidative deamination to produce ammonia and the pyruvoyl prosthetic group on the alpha chain.

It localises to the cell membrane. The catalysed reaction is a 1,2-diacyl-sn-glycero-3-phospho-L-serine + H(+) = a 1,2-diacyl-sn-glycero-3-phosphoethanolamine + CO2. It functions in the pathway phospholipid metabolism; phosphatidylethanolamine biosynthesis; phosphatidylethanolamine from CDP-diacylglycerol: step 2/2. In terms of biological role, catalyzes the formation of phosphatidylethanolamine (PtdEtn) from phosphatidylserine (PtdSer). The chain is Phosphatidylserine decarboxylase proenzyme from Chlorobium chlorochromatii (strain CaD3).